The primary structure comprises 1180 residues: Integrin alpha-1 (1180 aa).

Residues 1-28 (MVPRRPASLEVTVACIWLLTVILGFCVS) form the signal peptide. The Extracellular portion of the chain corresponds to 29–1142 (FNVDVKNSMS…SKDGLPGRVP (1114 aa)). The FG-GAP 1 repeat unit spans residues 30-91 (NVDVKNSMSF…CPVGRERAMP (62 aa)). Cys82 and Cys92 form a disulfide bridge. Residues Asn100, Asn105, Asn112, Asn217, Asn317, Asn341, Asn402, Asn418, and Asn459 are each glycosylated (N-linked (GlcNAc...) asparagine). The FG-GAP 2 repeat unit spans residues 101 to 160 (TSIPNVTEIKENMTFGSTLVTNPNGGFLACGPLYAYRCGHLHYTTGICSDVSPTFQVVNS). The 190-residue stretch at 175-364 (IVLDGSNSIY…LGERIFALEA (190 aa)) folds into the VWFA domain. The stretch at 365-417 (TADQSAASFEMEMSQTGFSAHYSQDWVMLGAVGAYDWNGTVVMQKANQMVIPH) is one FG-GAP 3 repeat. FG-GAP repeat units lie at residues 422 to 474 (QTEP…DGNI), 475 to 537 (NILQ…RFEY), 556 to 614 (SCTK…TIRE), and 618 to 678 (QRIP…FEPN). 4 residues coordinate Ca(2+): Asp497, Asp499, Asp501, and Asp505. Asn531 carries N-linked (GlcNAc...) asparagine glycosylation. Ca(2+)-binding residues include Asp579, Asn581, Asp583, Asp587, Asp641, Asn643, Asp645, and Asp649. An intrachain disulfide couples Cys687 to Cys696. 3 N-linked (GlcNAc...) asparagine glycosylation sites follow: Asn698, Asn747, and Asn779. Cys702 and Cys755 are joined by a disulfide. Residues Cys807 and Cys813 are joined by a disulfide bond. N-linked (GlcNAc...) asparagine glycans are attached at residues Asn820, Asn839, Asn882, Asn907, Asn938, Asn965, Asn973, and Asn1007. Cys877 and Cys885 form a disulfide bridge. Disulfide bonds link Cys1029–Cys1062 and Cys1066–Cys1073. N-linked (GlcNAc...) asparagine glycans are attached at residues Asn1084, Asn1103, and Asn1114. Residues 1143 to 1165 (LWVILLSAFAGLLLLMLLILALW) traverse the membrane as a helical segment. Residues 1166 to 1180 (KIGFFKRPLKKKMEK) lie on the Cytoplasmic side of the membrane. Positions 1168–1172 (GFFKR) match the GFFKR motif motif.

It belongs to the integrin alpha chain family. In terms of assembly, heterodimer of an alpha and a beta subunit. Alpha-1 associates with beta-1. Interacts with RAB21. Interacts (via cytoplasmic domain) with PTPN2; activates PTPN2 phosphatase activity towards EGFR and negatively regulates EGF signaling.

The protein resides in the membrane. Functionally, integrin alpha-1/beta-1 is a receptor for laminin and collagen. It recognizes the proline-hydroxylated sequence G-F-P-G-E-R in collagen. Involved in anchorage-dependent, negative regulation of EGF-stimulated cell growth. This Rattus norvegicus (Rat) protein is Integrin alpha-1 (Itga1).